The primary structure comprises 914 residues: Exoglucanase-2 (914 aa).

An N-terminal signal peptide occupies residues 1–33; sequence MKRRLMKGISLLTLVFLIGIMLQLSLKSELTAY. The CBM3 domain occupies 763–914; the sequence is VEGVLIIQSF…SGNLVYGIEP (152 aa).

It belongs to the glycosyl hydrolase 48 (cellulase L) family.

It carries out the reaction Hydrolysis of (1-&gt;4)-beta-D-glucosidic linkages in cellulose and cellotetraose, releasing cellobiose from the non-reducing ends of the chains.. This Thermoclostridium stercorarium (strain ATCC 35414 / DSM 8532 / NCIMB 11754) (Clostridium stercorarium) protein is Exoglucanase-2 (celY).